Reading from the N-terminus, the 341-residue chain is N-acetyl-gamma-glutamyl-phosphate reductase (341 aa).

C148 is an active-site residue.

The protein belongs to the NAGSA dehydrogenase family. Type 1 subfamily.

It localises to the cytoplasm. It catalyses the reaction N-acetyl-L-glutamate 5-semialdehyde + phosphate + NADP(+) = N-acetyl-L-glutamyl 5-phosphate + NADPH + H(+). The protein operates within amino-acid biosynthesis; L-arginine biosynthesis; N(2)-acetyl-L-ornithine from L-glutamate: step 3/4. Catalyzes the NADPH-dependent reduction of N-acetyl-5-glutamyl phosphate to yield N-acetyl-L-glutamate 5-semialdehyde. The sequence is that of N-acetyl-gamma-glutamyl-phosphate reductase from Pseudothermotoga lettingae (strain ATCC BAA-301 / DSM 14385 / NBRC 107922 / TMO) (Thermotoga lettingae).